Here is a 124-residue protein sequence, read N- to C-terminus: Fluoride-specific ion channel FluC (124 aa).

Transmembrane regions (helical) follow at residues 5–25, 38–58, 69–89, and 99–119; these read ILAV…TGTW, TLAV…LFLL, GLIV…LDTL, and LALG…WAGL. Na(+) is bound by residues Gly76 and Thr79.

It belongs to the fluoride channel Fluc/FEX (TC 1.A.43) family.

It localises to the cell inner membrane. It catalyses the reaction fluoride(in) = fluoride(out). Na(+) is not transported, but it plays an essential structural role and its presence is essential for fluoride channel function. Functionally, fluoride-specific ion channel. Important for reducing fluoride concentration in the cell, thus reducing its toxicity. In Pseudomonas syringae pv. syringae (strain B728a), this protein is Fluoride-specific ion channel FluC.